Reading from the N-terminus, the 362-residue chain is dTDP-glucose 4,6-dehydratase (362 aa).

Residues 11-12 (FI), 32-35 (DKLT), 58-59 (DI), 80-84 (LAAES), and threonine 99 each bind NAD(+). Serine 84 is a substrate binding site. A substrate-binding site is contributed by threonine 133. Aspartate 134 serves as the catalytic Proton donor. Catalysis depends on proton acceptor residues glutamate 135 and tyrosine 167. 167 to 171 (YSASK) lines the NAD(+) pocket. Asparagine 196 serves as a coordination point for substrate. Asparagine 197 is an NAD(+) binding site. Substrate is bound by residues 206-207 (KL), 222-224 (PVY), arginine 231, asparagine 266, and 300-304 (DRPGH).

It belongs to the NAD(P)-dependent epimerase/dehydratase family. dTDP-glucose dehydratase subfamily. Requires NAD(+) as cofactor.

The enzyme catalyses dTDP-alpha-D-glucose = dTDP-4-dehydro-6-deoxy-alpha-D-glucose + H2O. It participates in bacterial outer membrane biogenesis; LPS O-antigen biosynthesis. Functionally, catalyzes the dehydration of dTDP-D-glucose to form dTDP-4-dehydro-6-deoxy-D-glucose via a three-step process involving oxidation, dehydration and reduction. This reaction is a step in the biosynthesis of D-fucofuranose, a component of E.coli O52 O antigen. In Escherichia coli, this protein is dTDP-glucose 4,6-dehydratase (rmlB).